Here is a 115-residue protein sequence, read N- to C-terminus: Aspartate 1-decarboxylase (115 aa).

Ser-25 (schiff-base intermediate with substrate; via pyruvic acid) is an active-site residue. The residue at position 25 (Ser-25) is a Pyruvic acid (Ser). Residue Thr-57 participates in substrate binding. Tyr-58 functions as the Proton donor in the catalytic mechanism. 73–75 provides a ligand contact to substrate; that stretch reads GPA.

This sequence belongs to the PanD family. As to quaternary structure, heterooctamer of four alpha and four beta subunits. Pyruvate serves as cofactor. Is synthesized initially as an inactive proenzyme, which is activated by self-cleavage at a specific serine bond to produce a beta-subunit with a hydroxyl group at its C-terminus and an alpha-subunit with a pyruvoyl group at its N-terminus.

The protein localises to the cytoplasm. It carries out the reaction L-aspartate + H(+) = beta-alanine + CO2. Its pathway is cofactor biosynthesis; (R)-pantothenate biosynthesis; beta-alanine from L-aspartate: step 1/1. In terms of biological role, catalyzes the pyruvoyl-dependent decarboxylation of aspartate to produce beta-alanine. The protein is Aspartate 1-decarboxylase of Cytophaga hutchinsonii (strain ATCC 33406 / DSM 1761 / CIP 103989 / NBRC 15051 / NCIMB 9469 / D465).